The following is a 402-amino-acid chain: Ferredoxin--NADP reductase (402 aa).

Positions 18 to 74 (NRLFIYEVVGLGGDGRNENSLVRKSGTTFITVPYARMNQEMQRITKLGGKIVSIRPA) constitute a CpcD-like domain. The segment at 80–101 (IVSEGQSSAQASAQSPMASSTK) is disordered. Over residues 85-99 (QSSAQASAQSPMASS) the composition is skewed to low complexity. Residues 120-245 (KTPFLGKCIE…TGPVGKEMLL (126 aa)) form the FAD-binding FR-type domain. FAD is bound by residues 179-182 (RLYS), 200-202 (CVR), Tyr-206, 218-220 (VCS), and Thr-260. Ser-182 and Arg-202 together coordinate NADP(+). Residues Thr-260, 292-293 (VP), 322-323 (SR), Lys-332, 332-336 (KVYVQ), 361-362 (GL), and Glu-400 each bind NADP(+).

It belongs to the ferredoxin--NADP reductase type 1 family. The cofactor is FAD.

It localises to the cellular thylakoid membrane. The catalysed reaction is 2 reduced [2Fe-2S]-[ferredoxin] + NADP(+) + H(+) = 2 oxidized [2Fe-2S]-[ferredoxin] + NADPH. The polypeptide is Ferredoxin--NADP reductase (petH) (Picosynechococcus sp. (strain ATCC 27264 / PCC 7002 / PR-6) (Agmenellum quadruplicatum)).